The sequence spans 314 residues: MAYPTTNLTGLIGFAKAAKVTGGTGGKVVTVNSLADFKSAVSGSAKTIVVLGSSLKTSALTKVVFGSNKTIVGSFGGANVLTNIHLRAESNSSNVIFQNLVFKHDVAIKDNDDIQLYLNYGKGYWVDHCSWPGHTWSDNDGSLDKLIYIGEKADYITISNCLFSNHKYGCIFGHPADDNNSAYNGYPRLTICHNYYENIQVRAPGLMRYGYFHVFNNYVNKFQLAFTVAQNANVISERNVFGSGAEKKGMVDDKGNGSTFTDNGSSPAAVASKSPAAKWTASSNYSYSLMTTAAAQSWVVSNAGAQNSALKFPS.

Residue arginine 202 is part of the active site.

This sequence belongs to the polysaccharide lyase 1 family.

It catalyses the reaction Eliminative cleavage of (1-&gt;4)-alpha-D-galacturonan methyl ester to give oligosaccharides with 4-deoxy-6-O-methyl-alpha-D-galact-4-enuronosyl groups at their non-reducing ends.. This chain is Pectin lyase (pnl), found in Pectobacterium carotovorum (Erwinia carotovora).